Consider the following 202-residue polypeptide: uncharacterized protein (202 aa).

An Isoglutamyl lysine isopeptide (Lys-Gln) (interchain with Q-Cter in protein Pup) cross-link involves residue K136.

This is an uncharacterized protein from Mycobacterium tuberculosis (strain ATCC 25618 / H37Rv).